The sequence spans 1710 residues: Extracellular matrix protein A (1710 aa).

The first 22 residues, 1-22 (MKISIFILLLFISSMVIISVNA), serve as a signal peptide directing secretion. 66 Cys-rich CT repeats span residues 43-70 (NRWSTDMCSAGLLFGKYCTHTQICCDDE), 71-94 (NACTIDSCSKTSGCVHTPINVDDK), 95-117 (NPCTIDSCIKGFISHTQISCDDK), 118-141 (NACTIDSCDCSSGCQNKPMSCDDN), 142-165 (NPCTVDSCNNSTGCRNTPISVDDN), 166-189 (NPCTIDSCSKSTGVVHIPINVDDL), 190-213 (NPCTIDACTKEGGVTHTPVNVDDN), 214-237 (NKCTTDSCSLFTGITHTEICCDDN), 238-261 (NACTDDSCSPSTGCVNTPISCDDK), 262-285 (NPCTVDSCNNSTGCCYTPINVDDN), 286-309 (NPCTIDACTKSTGVTHTPINVDDN), 310-333 (NQCTTDSCTKEGGVTHTPVNTDDN), 334-357 (NPCTVDSCSPFTGVSHTPINVDDN), 358-381 (NKCTIDACTKEGGVTHTPVNTDDN), 382-405 (NACTLDSCSPLTGVTHTPINCDDK), 406-429 (KACTVDSCSNSTGCVNTPISCDDN), 430-453 (NPCTVDTCDDSTGCCNTPINVDDN), 454-477 (NPCTVDACTKSTGVTHTPVNVDDN), 478-501 (NKCTIDACTKEGGVTHTPVNTDDN), 502-525 (NACTLDNCSPLTGVTHTPINCDDK), 526-549 (KACTVDSCSNSTGCVNTPISCDDN), 550-573 (NPCTVDSCDDITGCCNTPINVDDN), 574-597 (NPCTVDACTKSTGVTHTPVNVDDN), 598-621 (NKCTIDACTKEGGVTHTPVNTDDN), 622-645 (NACTLDSCSPSTGVSHTPINCDDS), 646-669 (NPCTVDSCSNSTGCVNTPVNVDDN), 670-693 (NPCTVDACTKSTGVTHTPVNVDDN), 694-717 (NKCTIDACTKEGGVTHTPVNTDDN), 718-741 (NACTIDSCSPSTGISHTPINCDDK), 742-765 (KACTVDSCSNSTGCVNTPISCDDN), 766-789 (NPCTVDSCDDLTGCCNTPINVDDN), 790-813 (NPCTIDACTKSTGVTHTPVNVDDN), 814-837 (NKCTIDTCTKEGGVTHTPVNTDDN), 838-861 (NACTLDSCSPSTGVSHTPINCDDN), 862-885 (NKCTVDSCSNSTGCVNTPINCDDS), 886-909 (NPCTVDSCNNSTGCVNTPVNVDDN), 910-933 (NPCTVDACTKSTGVTHTPVNVDDN), 934-957 (NKCTIDACTKEGGVTHTPVNTDDN), 958-981 (NACTIDACTKEGGVTHTPVNTDDN), 982-1005 (NACTLDSCSPSTGVSHTPINCDDS), 1006-1029 (NPCTVDSCSNSTGCCNTPINVDDN), 1030-1053 (NPCTVDSCTKPTGVTHTPVNVDDN), 1054-1077 (NKCTIDACTKEGGVTHTPVNTDDN), 1078-1101 (NACTLDSCSPSTGISHAPINCDDS), 1102-1125 (NPCTIDSCNNSTGCCNTPINVDDN), 1126-1149 (NPCTVDSCTKSGGVTHTPVNVDDN), 1150-1173 (NKCTTDACTKEGGVTHTPISCDDN), 1174-1197 (NACTIDSCSNSTGCVNTPISCDDR), 1198-1221 (NPCTVDTCTKEKGCQHSPIDTDDS), 1222-1245 (NKCTIDACSSTTGVTHTSINCDDN), 1246-1269 (NACTFDSCSNSTGCVSTPISCDDK), 1270-1293 (NPCTLDSCDKKTGCCNTPINVDDN), 1294-1317 (DKCTTDSCTKEGGVTHTPISCDDN), 1318-1341 (NACTTDSCSKSTGCVNKPISCDDS), 1342-1365 (NPCTVDSCSNSTGCCNTPINVDDN), 1366-1389 (NPCTTDSCTKSGGVTHTPVNVDDN), 1390-1413 (NKCTTDSCTKEGGITHTPISCDDN), 1414-1437 (NPCTLDSCSPTTGCVNKPMNVDDN), 1438-1461 (DACTTDTCNKDGTITHTPINTDDN), 1462-1485 (NKCTLDACSPKTGVTHTPINCDDG), 1486-1509 (NKCTINSCSPSVGCISTPVSCPKP), 1511-1534 (DKCSISQCDSAKGCIEVPMNCTSD), 1558-1581 (NKCQVAKCDLIKGCTVSNVVCDDG), 1582-1606 (NACTEDSCCSDTGKCQFEPIKLPKN), 1608-1632 (NKCIISKCDPIKGTITNSTVNCECD), and 1658-1682 (NPKTADSCDSKTGKCINKPYNVITS). Asn-150 and Asn-151 each carry an N-linked (GlcNAc...) asparagine glycan. Asn-270 and Asn-271 each carry an N-linked (GlcNAc...) asparagine glycan. Residue Asn-415 is glycosylated (N-linked (GlcNAc...) asparagine). A glycan (N-linked (GlcNAc...) asparagine) is linked at Asn-535. A glycan (N-linked (GlcNAc...) asparagine) is linked at Asn-655. Asn-751 is a glycosylation site (N-linked (GlcNAc...) asparagine). N-linked (GlcNAc...) asparagine glycosylation is found at Asn-871, Asn-894, and Asn-895. N-linked (GlcNAc...) asparagine glycosylation occurs at Asn-1015. Asn-1110 and Asn-1111 each carry an N-linked (GlcNAc...) asparagine glycan. An N-linked (GlcNAc...) asparagine glycan is attached at Asn-1183. Asn-1255 carries N-linked (GlcNAc...) asparagine glycosylation. Asn-1351 is a glycosylation site (N-linked (GlcNAc...) asparagine). Asn-1530 carries N-linked (GlcNAc...) asparagine glycosylation. The N-linked (GlcNAc...) asparagine glycan is linked to Asn-1624.

The protein resides in the secreted. This chain is Extracellular matrix protein A (ecmA), found in Dictyostelium discoideum (Social amoeba).